The chain runs to 419 residues: Akuammiline synthase 1 (419 aa).

H151 functions as the Proton acceptor in the catalytic mechanism. Positions 206–213 (TRRFVFPA) match the Nuclear localization signal motif. D359 (proton acceptor) is an active-site residue.

Belongs to the plant acyltransferase family. As to quaternary structure, monomer.

It is found in the cytoplasm. The protein localises to the nucleus. It catalyses the reaction rhazimol + acetyl-CoA = akuammiline + CoA + H(+). Its pathway is alkaloid biosynthesis. Its function is as follows. Acyltransferase involved in the biosynthesis of akuammilan monoterpene indole alkaloids (MIAs) natural products, components with various biological properties such as antidiabetic, antibacterial, anti-inflammatory, anticancer, and antimalarial activities. Catalyzes the conversion of rhazimol to akuammiline. The chain is Akuammiline synthase 1 from Alstonia scholaris (Dogbane).